Reading from the N-terminus, the 278-residue chain is Nucleotide-binding protein Tbd_0529 (278 aa).

8 to 15 (GLSGSGKS) contacts ATP. 57–60 (DARS) is a GTP binding site.

The protein belongs to the RapZ-like family.

Functionally, displays ATPase and GTPase activities. In Thiobacillus denitrificans (strain ATCC 25259 / T1), this protein is Nucleotide-binding protein Tbd_0529.